The following is a 393-amino-acid chain: NAD(P)H-quinone oxidoreductase subunit H 1 (393 aa).

It belongs to the complex I 49 kDa subunit family. NDH-1 can be composed of about 15 different subunits; different subcomplexes with different compositions have been identified which probably have different functions.

Its subcellular location is the cell inner membrane. The catalysed reaction is a plastoquinone + NADH + (n+1) H(+)(in) = a plastoquinol + NAD(+) + n H(+)(out). It carries out the reaction a plastoquinone + NADPH + (n+1) H(+)(in) = a plastoquinol + NADP(+) + n H(+)(out). In terms of biological role, NDH-1 shuttles electrons from an unknown electron donor, via FMN and iron-sulfur (Fe-S) centers, to quinones in the respiratory and/or the photosynthetic chain. The immediate electron acceptor for the enzyme in this species is believed to be plastoquinone. Couples the redox reaction to proton translocation, and thus conserves the redox energy in a proton gradient. Cyanobacterial NDH-1 also plays a role in inorganic carbon-concentration. This chain is NAD(P)H-quinone oxidoreductase subunit H 1, found in Gloeobacter violaceus (strain ATCC 29082 / PCC 7421).